A 171-amino-acid polypeptide reads, in one-letter code: AP-3 complex subunit sigma (171 aa).

This sequence belongs to the adaptor complexes small subunit family. In terms of assembly, adaptor protein complex 3 (AP-3) is a heterotetramer composed of two large adaptins (delta-type subunit and beta-type subunit), a medium adaptin (mu-type subunit) and a small adaptin (sigma-type subunit).

It is found in the endosome membrane. Functionally, part of the AP-3 complex, an adaptor-related complex which is essential for the compartmentalization of the endocytic pathway. In Dictyostelium discoideum (Social amoeba), this protein is AP-3 complex subunit sigma (ap3s1).